The chain runs to 124 residues: Large ribosomal subunit protein bL20 (124 aa).

It belongs to the bacterial ribosomal protein bL20 family.

Functionally, binds directly to 23S ribosomal RNA and is necessary for the in vitro assembly process of the 50S ribosomal subunit. It is not involved in the protein synthesizing functions of that subunit. The sequence is that of Large ribosomal subunit protein bL20 from Gemmatimonas aurantiaca (strain DSM 14586 / JCM 11422 / NBRC 100505 / T-27).